A 320-amino-acid polypeptide reads, in one-letter code: SUMO-activating enzyme subunit 1B-1 (320 aa).

The residue at position 1 (M1) is an N-acetylmethionine.

Belongs to the ubiquitin-activating E1 family. Heterodimer of SAE1A or SAE1B and SAE2. The complex binds SUMO proteins via SAE2.

The protein resides in the nucleus. It functions in the pathway protein modification; protein sumoylation. In terms of biological role, the dimeric enzyme acts as an E1 ligase for SUMO1 and SUMO2. It mediates ATP-dependent activation of SUMO proteins and formation of a thioester with a conserved cysteine residue on SAE2. Functionally redundant with its paralog SAE1A. This is SUMO-activating enzyme subunit 1B-1 (SAE1B-1) from Arabidopsis thaliana (Mouse-ear cress).